A 167-amino-acid chain; its full sequence is uncharacterized protein (167 aa).

Residues 5–27 (LILLTFVSFVFSKTFYYDVYVFF) form a helical membrane-spanning segment.

It is found in the membrane. This is an uncharacterized protein from Aquifex aeolicus (strain VF5).